A 251-amino-acid polypeptide reads, in one-letter code: Ly6/PLAUR domain-containing protein 5 (251 aa).

Positions 1–25 (MAMGVPRVILLCLFGAALCLTGSQA) are cleaved as a signal peptide. Residues N120 and N174 are each glycosylated (N-linked (GlcNAc...) asparagine). The UPAR/Ly6 domain occupies 135–214 (CYACIGVHQD…GSCCEGYLCN (80 aa)). Residue A225 is the site of GPI-anchor amidated alanine attachment. A propeptide spans 226 to 251 (SATTPPRALQVLALLLPVLLLVGLSA) (removed in mature form).

It is found in the cell membrane. The polypeptide is Ly6/PLAUR domain-containing protein 5 (LYPD5) (Homo sapiens (Human)).